Reading from the N-terminus, the 898-residue chain is Histone-lysine N-methyltransferase mes-4 (898 aa).

The segment at 1–68 is disordered; that stretch reads MLPSSGDSSK…APILTNAPKD (68 aa). Residues 36 to 51 show a composition bias toward polar residues; that stretch reads QRNATPQGAGSETSSN. 2 PHD-type zinc fingers span residues 126–214 and 303–355; these read DSKC…CNLD and IKAC…CVCG. The SET domain maps to 537–665; that stretch reads EKIKLAATLC…DGDEITFSYN (129 aa). Residues 671–687 form the Post-SET domain; sequence NLPDCECGAENCMGTMG. The tract at residues 689–847 is disordered; the sequence is AKREKPEVAD…SLQTIQETGK (159 aa). Residues 692 to 704 show a composition bias toward basic and acidic residues; sequence EKPEVADSSEKAA. The span at 705–719 shows a compositional bias: basic residues; the sequence is KKNKSSKKKSVKNQN. 2 stretches are compositionally biased toward low complexity: residues 737–751 and 761–773; these read ISPS…SSTS and SQNK…NSNQ. Positions 774-788 are enriched in polar residues; the sequence is PVADTGSTLSTSTEL. A compositionally biased stretch (low complexity) spans 802–811; that stretch reads SSRSRAASSS.

This sequence belongs to the class V-like SAM-binding methyltransferase superfamily. Histone-lysine methyltransferase family. SET2 subfamily. As to expression, in adults, it is predominantly expressed in the germline, and weakly expressed in intestinal cells.

It is found in the nucleus. The protein resides in the chromosome. The catalysed reaction is L-lysyl(36)-[histone H3] + 2 S-adenosyl-L-methionine = N(6),N(6)-dimethyl-L-lysyl(36)-[histone H3] + 2 S-adenosyl-L-homocysteine + 2 H(+). Histone methyltransferase. Dimethylates 'Lys-36' of histone H3, a specific tag for epigenetic transcriptional activation. Plays a central role in early development and is responsible for all H3 'Lys-36' dimethylation until about the 40-cell stage. Indirectly involved in the global inactivation of the X chromosomes in germline cells, possibly by excluding the mes-2-mes-3-mes-6 repressive Polycomb complex from the autosomes. Not related to transcription elongation. Required for small-RNA-induced H3K27 trimethylation. May suppress sensitivity to RNAi. May regulate the expression of genes required for vulval development. The polypeptide is Histone-lysine N-methyltransferase mes-4 (Caenorhabditis elegans).